A 315-amino-acid polypeptide reads, in one-letter code: Protein-methionine-sulfoxide reductase catalytic subunit MsrP (315 aa).

A signal peptide (tat-type signal) is located at residues 1–45 (MPSYRPPKIASSEITPRQVYLRRREFLGAATLGAMALYGAGKASA). Residues Asn71, 74–75 (YE), Cys129, Thr164, Asn214, Arg219, and 230–232 (GIK) each bind Mo-molybdopterin.

The protein belongs to the MsrP family. Heterodimer of a catalytic subunit (MsrP) and a heme-binding subunit (MsrQ). Mo-molybdopterin serves as cofactor. Post-translationally, predicted to be exported by the Tat system. The position of the signal peptide cleavage has not been experimentally proven.

Its subcellular location is the periplasm. The enzyme catalyses L-methionyl-[protein] + a quinone + H2O = L-methionyl-(S)-S-oxide-[protein] + a quinol. It catalyses the reaction L-methionyl-[protein] + a quinone + H2O = L-methionyl-(R)-S-oxide-[protein] + a quinol. In terms of biological role, part of the MsrPQ system that repairs oxidized periplasmic proteins containing methionine sulfoxide residues (Met-O), using respiratory chain electrons. Thus protects these proteins from oxidative-stress damage caused by reactive species of oxygen and chlorine generated by the host defense mechanisms. MsrPQ is essential for the maintenance of envelope integrity under bleach stress, rescuing a wide series of structurally unrelated periplasmic proteins from methionine oxidation. The catalytic subunit MsrP is non-stereospecific, being able to reduce both (R-) and (S-) diastereoisomers of methionine sulfoxide. The polypeptide is Protein-methionine-sulfoxide reductase catalytic subunit MsrP (Rhizobium etli (strain ATCC 51251 / DSM 11541 / JCM 21823 / NBRC 15573 / CFN 42)).